Reading from the N-terminus, the 194-residue chain is Peptidyl-tRNA hydrolase (194 aa).

Tyr-17 lines the tRNA pocket. The active-site Proton acceptor is His-22. TRNA-binding residues include Tyr-68, Asn-70, and Asn-116.

Belongs to the PTH family. As to quaternary structure, monomer.

The protein localises to the cytoplasm. The catalysed reaction is an N-acyl-L-alpha-aminoacyl-tRNA + H2O = an N-acyl-L-amino acid + a tRNA + H(+). In terms of biological role, hydrolyzes ribosome-free peptidyl-tRNAs (with 1 or more amino acids incorporated), which drop off the ribosome during protein synthesis, or as a result of ribosome stalling. Its function is as follows. Catalyzes the release of premature peptidyl moieties from peptidyl-tRNA molecules trapped in stalled 50S ribosomal subunits, and thus maintains levels of free tRNAs and 50S ribosomes. This Pseudomonas paraeruginosa (strain DSM 24068 / PA7) (Pseudomonas aeruginosa (strain PA7)) protein is Peptidyl-tRNA hydrolase.